Here is a 311-residue protein sequence, read N- to C-terminus: Methionyl-tRNA formyltransferase (311 aa).

A (6S)-5,6,7,8-tetrahydrofolate-binding site is contributed by 110 to 113 (SLLP).

The protein belongs to the Fmt family.

The enzyme catalyses L-methionyl-tRNA(fMet) + (6R)-10-formyltetrahydrofolate = N-formyl-L-methionyl-tRNA(fMet) + (6S)-5,6,7,8-tetrahydrofolate + H(+). Attaches a formyl group to the free amino group of methionyl-tRNA(fMet). The formyl group appears to play a dual role in the initiator identity of N-formylmethionyl-tRNA by promoting its recognition by IF2 and preventing the misappropriation of this tRNA by the elongation apparatus. This chain is Methionyl-tRNA formyltransferase, found in Streptococcus pyogenes serotype M18 (strain MGAS8232).